Consider the following 349-residue polypeptide: Protein pelota homolog (349 aa).

This sequence belongs to the eukaryotic release factor 1 family. Pelota subfamily. As to quaternary structure, monomer. A divalent metal cation serves as cofactor.

Its subcellular location is the cytoplasm. In terms of biological role, may function in recognizing stalled ribosomes, interact with stem-loop structures in stalled mRNA molecules, and effect endonucleolytic cleavage of the mRNA. May play a role in the release non-functional ribosomes and degradation of damaged mRNAs. Has endoribonuclease activity. The polypeptide is Protein pelota homolog (Nitrosopumilus maritimus (strain SCM1)).